We begin with the raw amino-acid sequence, 148 residues long: MKVILLQDVKKLGKKGDVINASDGYARNFLFPKKLAQEATDNNLHILNNKKENERRQKLAELEAAQALAADLKDKVIKIDGKAGDNGKLFGAITSKDVAGLIKKQFNVEVDKKKIVMDTIKIAGTYNIEVKLYPEVSTKMKVMVVPVQ.

This sequence belongs to the bacterial ribosomal protein bL9 family.

Its function is as follows. Binds to the 23S rRNA. This chain is Large ribosomal subunit protein bL9, found in Clostridium perfringens (strain ATCC 13124 / DSM 756 / JCM 1290 / NCIMB 6125 / NCTC 8237 / Type A).